The sequence spans 493 residues: ATP synthase subunit beta, chloroplastic (493 aa).

Residue 170–177 participates in ATP binding; that stretch reads GGAGVGKT.

Belongs to the ATPase alpha/beta chains family. As to quaternary structure, F-type ATPases have 2 components, CF(1) - the catalytic core - and CF(0) - the membrane proton channel. CF(1) has five subunits: alpha(3), beta(3), gamma(1), delta(1), epsilon(1). CF(0) has four main subunits: a(1), b(1), b'(1) and c(9-12).

It localises to the plastid. Its subcellular location is the chloroplast thylakoid membrane. The catalysed reaction is ATP + H2O + 4 H(+)(in) = ADP + phosphate + 5 H(+)(out). In terms of biological role, produces ATP from ADP in the presence of a proton gradient across the membrane. The catalytic sites are hosted primarily by the beta subunits. The polypeptide is ATP synthase subunit beta, chloroplastic (Adiantum capillus-veneris (Maidenhair fern)).